We begin with the raw amino-acid sequence, 168 residues long: G/U mismatch-specific DNA glycosylase (168 aa).

This sequence belongs to the uracil-DNA glycosylase (UDG) superfamily. TDG/mug family. Binds DNA as a monomer.

It localises to the cytoplasm. It carries out the reaction Specifically hydrolyzes mismatched double-stranded DNA and polynucleotides, releasing free uracil.. Its function is as follows. Excises ethenocytosine and uracil, which can arise by alkylation or deamination of cytosine, respectively, from the corresponding mispairs with guanine in ds-DNA. It is capable of hydrolyzing the carbon-nitrogen bond between the sugar-phosphate backbone of the DNA and the mispaired base. The complementary strand guanine functions in substrate recognition. Required for DNA damage lesion repair in stationary-phase cells. This Enterobacter sp. (strain 638) protein is G/U mismatch-specific DNA glycosylase.